Here is a 242-residue protein sequence, read N- to C-terminus: 4-hydroxy-tetrahydrodipicolinate reductase (242 aa).

Residues 79 to 81 (ATT) and 103 to 106 (SANM) contribute to the NAD(+) site. Residue His-135 is the Proton donor/acceptor of the active site. (S)-2,3,4,5-tetrahydrodipicolinate is bound at residue His-136. Lys-139 (proton donor) is an active-site residue. 145-146 (GT) provides a ligand contact to (S)-2,3,4,5-tetrahydrodipicolinate.

The protein belongs to the DapB family.

The protein localises to the cytoplasm. The catalysed reaction is (S)-2,3,4,5-tetrahydrodipicolinate + NAD(+) + H2O = (2S,4S)-4-hydroxy-2,3,4,5-tetrahydrodipicolinate + NADH + H(+). It carries out the reaction (S)-2,3,4,5-tetrahydrodipicolinate + NADP(+) + H2O = (2S,4S)-4-hydroxy-2,3,4,5-tetrahydrodipicolinate + NADPH + H(+). It participates in amino-acid biosynthesis; L-lysine biosynthesis via DAP pathway; (S)-tetrahydrodipicolinate from L-aspartate: step 4/4. In terms of biological role, catalyzes the conversion of 4-hydroxy-tetrahydrodipicolinate (HTPA) to tetrahydrodipicolinate. The sequence is that of 4-hydroxy-tetrahydrodipicolinate reductase from Staphylococcus carnosus (strain TM300).